Reading from the N-terminus, the 51-residue chain is Sperm protamine P1 (51 aa).

Belongs to the protamine P1 family. In terms of assembly, cross-linked by interchain disulfide bonds around the DNA-helix. As to expression, testis.

It localises to the nucleus. Its subcellular location is the chromosome. Protamines substitute for histones in the chromatin of sperm during the haploid phase of spermatogenesis. They compact sperm DNA into a highly condensed, stable and inactive complex. This Hylobates lar (Lar gibbon) protein is Sperm protamine P1 (PRM1).